The sequence spans 93 residues: MPEPAKSAPAPKKGSKKAVTKTQKKGDKKRXXXXXXXXXXXXXXXXXXXXXXXXXXXXXXXXMNSFVNDIFERIAGEASRLAHYNKRSTITSR.

Residues 1–12 (MPEPAKSAPAPK) show a composition bias toward low complexity. A disordered region spans residues 1–31 (MPEPAKSAPAPKKGSKKAVTKTQKKGDKKRX). 2 positions are modified to N6-acetyllysine: Lys-6 and Lys-13. A compositionally biased stretch (basic residues) spans 13–28 (KGSKKAVTKTQKKGDK). Ser-15 is subject to Phosphoserine. Residues Lys-16 and Lys-21 each carry the N6-acetyllysine modification.

Belongs to the histone H2B family. The nucleosome is a histone octamer containing two molecules each of H2A, H2B, H3 and H4 assembled in one H3-H4 heterotetramer and two H2A-H2B heterodimers. The octamer wraps approximately 147 bp of DNA. Monoubiquitination at the C-terminal Lys gives a specific tag for epigenetic transcriptional activation and is also prerequisite for histone H3 'Lys-4' and 'Lys-79' methylation. In terms of processing, phosphorylated on Ser-15 during apoptosis; which facilitates apoptotic chromatin condensation.

It is found in the nucleus. It localises to the chromosome. Functionally, core component of nucleosome. Nucleosomes wrap and compact DNA into chromatin, limiting DNA accessibility to the cellular machineries which require DNA as a template. Histones thereby play a central role in transcription regulation, DNA repair, DNA replication and chromosomal stability. DNA accessibility is regulated via a complex set of post-translational modifications of histones, also called histone code, and nucleosome remodeling. This is Histone H2B from Crocodylus niloticus (Nile crocodile).